A 180-amino-acid polypeptide reads, in one-letter code: Large ribosomal subunit protein uL6 (180 aa).

Belongs to the universal ribosomal protein uL6 family. Part of the 50S ribosomal subunit.

This protein binds to the 23S rRNA, and is important in its secondary structure. It is located near the subunit interface in the base of the L7/L12 stalk, and near the tRNA binding site of the peptidyltransferase center. This Salinispora arenicola (strain CNS-205) protein is Large ribosomal subunit protein uL6.